A 269-amino-acid polypeptide reads, in one-letter code: Tryptophan synthase alpha chain (269 aa).

Residues Glu-49 and Asp-60 each act as proton acceptor in the active site.

The protein belongs to the TrpA family. As to quaternary structure, tetramer of two alpha and two beta chains.

It catalyses the reaction (1S,2R)-1-C-(indol-3-yl)glycerol 3-phosphate + L-serine = D-glyceraldehyde 3-phosphate + L-tryptophan + H2O. Its pathway is amino-acid biosynthesis; L-tryptophan biosynthesis; L-tryptophan from chorismate: step 5/5. Functionally, the alpha subunit is responsible for the aldol cleavage of indoleglycerol phosphate to indole and glyceraldehyde 3-phosphate. The protein is Tryptophan synthase alpha chain of Actinobacillus pleuropneumoniae serotype 5b (strain L20).